The chain runs to 326 residues: MKPSIVLYKSIPTDLHQRLAQHFTVNSFDGLTPDNQPELLAALQQAEGLIGSGGKIDQDFLQLAPNLRAASTISVGYDNFDVEALSQRGIALMHTPTVLTETVADTMMALMLSTARRVVELAERVKAGEWQESIGDDWFGVDVHHKTIGILGMGRIGMALAQRAHFGFSMPVLYTSRRPHEAAEQRFGARHCSLDTLLAEADFLCITLPMTEQTYHMIGREQLAKIKSSAILINAGRGPVVDEQALIAALQDGTIHAAGLDVFEQEPLPVDSPLLTLRNVVAVPHIGSATHETRYNMAACAVDNLINALTGTVKENCVNPQVLITH.

Catalysis depends on residues R237 and E266. H285 functions as the Proton donor in the catalytic mechanism.

Belongs to the D-isomer specific 2-hydroxyacid dehydrogenase family. GhrB subfamily. In terms of assembly, homodimer.

It is found in the cytoplasm. The catalysed reaction is glycolate + NADP(+) = glyoxylate + NADPH + H(+). It carries out the reaction (R)-glycerate + NAD(+) = 3-hydroxypyruvate + NADH + H(+). It catalyses the reaction (R)-glycerate + NADP(+) = 3-hydroxypyruvate + NADPH + H(+). In terms of biological role, catalyzes the NADPH-dependent reduction of glyoxylate and hydroxypyruvate into glycolate and glycerate, respectively. The polypeptide is Glyoxylate/hydroxypyruvate reductase B (Yersinia pseudotuberculosis serotype O:3 (strain YPIII)).